Here is a 305-residue protein sequence, read N- to C-terminus: Taste receptor type 2 member 13 (305 aa).

Residues 1-7 lie on the Extracellular side of the membrane; the sequence is MGSNVYG. Residues 8–28 traverse the membrane as a helical segment; sequence ILTMVMIAEFVFGNMSNGFIV. Residues 29–43 lie on the Cytoplasmic side of the membrane; that stretch reads LINCIDWVRKGTLSS. The helical transmembrane segment at 44-64 threads the bilayer; sequence IGWILLFLAISRMVLIWEMLI. The Extracellular portion of the chain corresponds to 65 to 88; the sequence is TWIKYMKYSFSFVTGTELRGIMFT. The helical transmembrane segment at 89 to 109 threads the bilayer; it reads WVISNHFSLWLATILSIFYLL. Residues 110 to 128 are Cytoplasmic-facing; sequence KIASFSKPVFLYLKWREKK. Residues 129-149 traverse the membrane as a helical segment; the sequence is VLLIVLLGNLIFLMLNILQIN. Over 150 to 182 the chain is Extracellular; that stretch reads KHIEHWMYQYERNITWSSRVSDFAGFSNLVLLE. The N-linked (GlcNAc...) asparagine glycan is linked to Asn162. The helical transmembrane segment at 183 to 203 threads the bilayer; it reads MIVFSVTPFTVALVSFILLIF. At 204 to 232 the chain is on the cytoplasmic side; that stretch reads SLWKHLQKMHLNSRGERDPSTKAHVNALR. The helical transmembrane segment at 233 to 253 threads the bilayer; it reads IMVSFLLLYATYFISFFLSLI. Topologically, residues 254 to 262 are extracellular; that stretch reads PMAHKTRLG. A helical transmembrane segment spans residues 263–283; sequence LMFSITVGLFYPSSHSFILIL. The Cytoplasmic portion of the chain corresponds to 284–305; sequence GHSNLRQASLWVMTYLKCGQKH.

The protein belongs to the G-protein coupled receptor T2R family.

The protein resides in the cell membrane. Its function is as follows. Receptor that may play a role in the perception of bitterness and is gustducin-linked. May play a role in sensing the chemical composition of the gastrointestinal content. The activity of this receptor may stimulate alpha gustducin, mediate PLC-beta-2 activation and lead to the gating of TRPM5. The protein is Taste receptor type 2 member 13 of Mus musculus (Mouse).